The primary structure comprises 373 residues: Glutamate 5-kinase (373 aa).

Residue lysine 15 participates in ATP binding. The substrate site is built by serine 54, aspartate 141, and asparagine 153. Residues 173 to 174 (SD) and 215 to 221 (TGGMATK) each bind ATP. One can recognise a PUA domain in the interval 280-358 (RGKLLVDEGA…SEIEVVLGYK (79 aa)).

It belongs to the glutamate 5-kinase family.

Its subcellular location is the cytoplasm. It catalyses the reaction L-glutamate + ATP = L-glutamyl 5-phosphate + ADP. Its pathway is amino-acid biosynthesis; L-proline biosynthesis; L-glutamate 5-semialdehyde from L-glutamate: step 1/2. In terms of biological role, catalyzes the transfer of a phosphate group to glutamate to form L-glutamate 5-phosphate. This is Glutamate 5-kinase from Syntrophotalea carbinolica (strain DSM 2380 / NBRC 103641 / GraBd1) (Pelobacter carbinolicus).